We begin with the raw amino-acid sequence, 722 residues long: Ribosomal RNA large subunit methyltransferase K/L (722 aa).

One can recognise a THUMP domain in the interval 55 to 167; the sequence is TGYRACLWSR…GNEGTLYLDL (113 aa).

Belongs to the methyltransferase superfamily. RlmKL family.

It localises to the cytoplasm. The catalysed reaction is guanosine(2445) in 23S rRNA + S-adenosyl-L-methionine = N(2)-methylguanosine(2445) in 23S rRNA + S-adenosyl-L-homocysteine + H(+). It catalyses the reaction guanosine(2069) in 23S rRNA + S-adenosyl-L-methionine = N(2)-methylguanosine(2069) in 23S rRNA + S-adenosyl-L-homocysteine + H(+). In terms of biological role, specifically methylates the guanine in position 2445 (m2G2445) and the guanine in position 2069 (m7G2069) of 23S rRNA. The polypeptide is Ribosomal RNA large subunit methyltransferase K/L (Desulfotalea psychrophila (strain LSv54 / DSM 12343)).